The primary structure comprises 195 residues: E3 ubiquitin-protein ligase ZNRF1 (195 aa).

Positions 1 to 10 (MGGKQSSASR) are enriched in polar residues. Disordered stretches follow at residues 1–36 (MGGK…HFRA) and 61–84 (PFGL…DSRG). Residue Gly2 is the site of N-myristoyl glycine attachment. A compositionally biased stretch (low complexity) spans 18–29 (VSSDDSAVPPSS). The RING-type; atypical zinc-finger motif lies at 152-193 (CVICLEELSQGDTIARLPCLCIYHKSCIDSWFEVNRCCPEHP).

It is found in the endosome. The protein localises to the lysosome. Its subcellular location is the membrane. The enzyme catalyses S-ubiquitinyl-[E2 ubiquitin-conjugating enzyme]-L-cysteine + [acceptor protein]-L-lysine = [E2 ubiquitin-conjugating enzyme]-L-cysteine + N(6)-ubiquitinyl-[acceptor protein]-L-lysine.. The protein operates within protein modification; protein ubiquitination. In terms of biological role, E3 ubiquitin-protein ligase that plays a role in neuron cells differentiation. Plays a role in the establishment and maintenance of neuronal transmission and plasticity. The chain is E3 ubiquitin-protein ligase ZNRF1 (znrf1) from Xenopus tropicalis (Western clawed frog).